Reading from the N-terminus, the 123-residue chain is MLLDNDAFLSALNKLYQTTSKKGTVWVTMKKYVDSDSNFSRKKAERIKESEEEENKCLVRATNGKKKISTIVLAKDKSMFEKNYKNVLLINLDNLKVEKKKPTPTTTPSSSTTAKTAAKKTKV.

Positions Lys99–Val123 are disordered. The segment covering Thr103–Thr116 has biased composition (low complexity).

It belongs to the SRP14 family. As to quaternary structure, heterodimer with srp9; binds RNA as heterodimer. Component of a signal recognition particle (SRP) complex that consists of a 7SL RNA molecule and six protein subunits: srp72, srp68, srp54, srp19, srp14 and srp9.

It localises to the cytoplasm. Functionally, component of the signal recognition particle (SRP) complex, a ribonucleoprotein complex that mediates the cotranslational targeting of secretory and membrane proteins to the endoplasmic reticulum (ER). Srp9 together with srp14 and the Alu portion of the SRP RNA, constitutes the elongation arrest domain of SRP. The complex of srp9 and srp14 is required for SRP RNA binding. The chain is Signal recognition particle 14 kDa protein (srp14-1) from Dictyostelium discoideum (Social amoeba).